Here is a 315-residue protein sequence, read N- to C-terminus: Aspartate carbamoyltransferase catalytic subunit (315 aa).

Carbamoyl phosphate is bound by residues Arg64 and Thr65. Lys93 contacts L-aspartate. The carbamoyl phosphate site is built by Arg114, His142, and Gln145. L-aspartate contacts are provided by Arg175 and Arg237. Leu276 and Pro277 together coordinate carbamoyl phosphate.

It belongs to the aspartate/ornithine carbamoyltransferase superfamily. ATCase family. Heterooligomer of catalytic and regulatory chains.

It carries out the reaction carbamoyl phosphate + L-aspartate = N-carbamoyl-L-aspartate + phosphate + H(+). It participates in pyrimidine metabolism; UMP biosynthesis via de novo pathway; (S)-dihydroorotate from bicarbonate: step 2/3. Functionally, catalyzes the condensation of carbamoyl phosphate and aspartate to form carbamoyl aspartate and inorganic phosphate, the committed step in the de novo pyrimidine nucleotide biosynthesis pathway. The polypeptide is Aspartate carbamoyltransferase catalytic subunit (Thermofilum pendens (strain DSM 2475 / Hrk 5)).